The chain runs to 333 residues: T-cell surface glycoprotein CD1b-2 (333 aa).

Positions 1–20 are cleaved as a signal peptide; sequence MLLLPLLLLGVILPGGDNED. Residues 21-302 are Extracellular-facing; that stretch reads VFQGPTSFHL…LYWGHPTSIG (282 aa). 3 N-linked (GlcNAc...) asparagine glycosylation sites follow: Asn38, Asn75, and Asn146. Disulfide bonds link Cys120–Cys184, Cys149–Cys163, and Cys224–Cys279. One can recognise an Ig-like domain in the interval 185–295; that stretch reads PRYLLGVLDA…LGDQDIILYW (111 aa). Residues 303–323 form a helical membrane-spanning segment; it reads LILVAIIVPSLILSICLALWF. Residues 324–333 lie on the Cytoplasmic side of the membrane; sequence WRRWSYQNIL. The Internalization signal signature appears at 329-332; it reads YQNI.

As to quaternary structure, heterodimer with B2M (beta-2-microglobulin). Interacts with saposin C.

It is found in the cell membrane. Its subcellular location is the endosome membrane. The protein localises to the lysosome membrane. Functionally, antigen-presenting protein that binds self and non-self lipid and glycolipid antigens and presents them to T-cell receptors on natural killer T-cells. The sequence is that of T-cell surface glycoprotein CD1b-2 from Ovis aries (Sheep).